A 178-amino-acid polypeptide reads, in one-letter code: ATP synthase subunit delta (178 aa).

Belongs to the ATPase delta chain family. F-type ATPases have 2 components, F(1) - the catalytic core - and F(0) - the membrane proton channel. F(1) has five subunits: alpha(3), beta(3), gamma(1), delta(1), epsilon(1). F(0) has three main subunits: a(1), b(2) and c(10-14). The alpha and beta chains form an alternating ring which encloses part of the gamma chain. F(1) is attached to F(0) by a central stalk formed by the gamma and epsilon chains, while a peripheral stalk is formed by the delta and b chains.

It is found in the cell inner membrane. In terms of biological role, f(1)F(0) ATP synthase produces ATP from ADP in the presence of a proton or sodium gradient. F-type ATPases consist of two structural domains, F(1) containing the extramembraneous catalytic core and F(0) containing the membrane proton channel, linked together by a central stalk and a peripheral stalk. During catalysis, ATP synthesis in the catalytic domain of F(1) is coupled via a rotary mechanism of the central stalk subunits to proton translocation. Functionally, this protein is part of the stalk that links CF(0) to CF(1). It either transmits conformational changes from CF(0) to CF(1) or is implicated in proton conduction. In Alcanivorax borkumensis (strain ATCC 700651 / DSM 11573 / NCIMB 13689 / SK2), this protein is ATP synthase subunit delta.